The following is a 431-amino-acid chain: MQVRHFSSCRIVQAGKERFVPSSGTYPKGFKVGGFFTGVKKNAFNMDLAMLSSDKPCNAAAVFTTNVFKAAPVQVDRKILDVTQGKGIKTVVVNSGCANAVTGEGGIHDAQQMVKKADQVFGSESDLPASLVMSTGVIGQRLKIDKILKGIEEHAPAMKDDHEAWLNTAKGICTTDTFPKLMSQQFKIGDNTYTIAGLTKGAGMIHPRMATLLGFFATDAPVSASALGVALKHAADRSFNAISVDGDTSTNDTIVCLANGAAGGPEITETSASFPVFQDILTDFSSRLSQLVVRDGEGATKFVKISVNDAVSEQEAAKVAETVACSPLVKTALYGKDANWGRILCAVGYSGMQVEPTKTTVSFMPTDGSSELKLLVNGEPEQVDEARASEILDMEDLEIQINLGTGGGKNANFWTCDFSHEYVTINGDYRT.

Residues Thr-174, Lys-200, Thr-211, Glu-297, Asn-426, and Thr-431 each coordinate substrate. Catalysis depends on Thr-211, which acts as the Nucleophile.

This sequence belongs to the ArgJ family. In terms of assembly, heterodimer of an alpha and a beta chain. Post-translationally, the alpha and beta chains are autoproteolytically processed from a single precursor protein within the mitochondrion.

The protein resides in the mitochondrion matrix. It catalyses the reaction N(2)-acetyl-L-ornithine + L-glutamate = N-acetyl-L-glutamate + L-ornithine. The catalysed reaction is L-glutamate + acetyl-CoA = N-acetyl-L-glutamate + CoA + H(+). It functions in the pathway amino-acid biosynthesis; L-arginine biosynthesis; L-ornithine and N-acetyl-L-glutamate from L-glutamate and N(2)-acetyl-L-ornithine (cyclic): step 1/1. The protein operates within amino-acid biosynthesis; L-arginine biosynthesis; N(2)-acetyl-L-ornithine from L-glutamate: step 1/4. Catalyzes two activities which are involved in the cyclic version of arginine biosynthesis: the synthesis of acetylglutamate from glutamate and acetyl-CoA, and of ornithine by transacetylation between acetylornithine and glutamate. The polypeptide is Arginine biosynthesis bifunctional protein ArgJ, mitochondrial (Yarrowia lipolytica (strain CLIB 122 / E 150) (Yeast)).